A 398-amino-acid chain; its full sequence is MVKRVHIFDWHKEHAKKVEEFAGWEMPIWYSSIKEEHLAVRNGVGIFDVSHMGEFIFRGKDALEFLQYVTTNDISKPPAISGTYTLVLNERGAVKDETLVFNMGNDTYMMVCDSDAFEKLDAWFNAIKRGIEKFGDIDLEIENKTYDMAMFSIQGPKARDLAKELFGIDINDLWWFQAKEVELDGIKMLLSRSGYTGENGFEVYFEDANPYHPDPSKRGEPEKALHVWKTILEAGEKYGIKPAGLGARDTLRLEAGYTLYGNETKEKQLLSTDIDEVTPLQANLDFAIFWDKEFIGKEALLKQKERGLPSKMVHFKMVDKGVPREGYKVYKDGELIGEVTSGTLSPLLGIGIGIAFVKPEYAVPGVEIEVEIRGKPKKAVTVAPPFYDPKKYGAFREE.

The protein belongs to the GcvT family. As to quaternary structure, the glycine cleavage system is composed of four proteins: P, T, L and H.

The catalysed reaction is N(6)-[(R)-S(8)-aminomethyldihydrolipoyl]-L-lysyl-[protein] + (6S)-5,6,7,8-tetrahydrofolate = N(6)-[(R)-dihydrolipoyl]-L-lysyl-[protein] + (6R)-5,10-methylene-5,6,7,8-tetrahydrofolate + NH4(+). The glycine cleavage system catalyzes the degradation of glycine. The protein is Probable aminomethyltransferase of Thermococcus kodakarensis (strain ATCC BAA-918 / JCM 12380 / KOD1) (Pyrococcus kodakaraensis (strain KOD1)).